We begin with the raw amino-acid sequence, 418 residues long: Flavin-dependent L-tryptophan oxidase VioA (418 aa).

Mg(2+) is bound at residue Gly13. Residue Ser15 coordinates FAD. A Mg(2+)-binding site is contributed by Gly16. FAD contacts are provided by Asp38, Arg46, and Arg64. Residues Arg64 and His163 each contribute to the substrate site. FAD is bound at residue Leu208. Residue Ala240 coordinates Mg(2+). Tyr309 contributes to the substrate binding site. Met398 lines the FAD pocket.

The protein belongs to the flavin monoamine oxidase family. As to quaternary structure, homodimer. It depends on FAD as a cofactor. Requires Mg(2+) as cofactor.

It catalyses the reaction L-tryptophan + O2 = 2-iminio-3-(indol-3-yl)propanoate + H2O2. The catalysed reaction is 7-chloro-L-tryptophan + O2 = 3-(7-chloroindol-3-yl)-2-iminopropanoate + H2O2. Its pathway is pigment biosynthesis; violacein biosynthesis. In terms of biological role, the enzyme generates the imine form of indole 3-pyruvate (IPA) from L-tryptophan (L-Trp), with concomitant two-electron reduction of O(2) to H(2)O(2). The polypeptide is Flavin-dependent L-tryptophan oxidase VioA (vioA) (Chromobacterium violaceum (strain ATCC 12472 / DSM 30191 / JCM 1249 / CCUG 213 / NBRC 12614 / NCIMB 9131 / NCTC 9757 / MK)).